We begin with the raw amino-acid sequence, 438 residues long: Phosphatidylserine decarboxylase proenzyme 1, mitochondrial (438 aa).

The N-terminal 21 residues, 1 to 21 (MRRFRVWPPSPSPWPLLASRP), are a transit peptide targeting the mitochondrion. Over 22 to 48 (CPHSHHHRSPFHASANSGARQGNFILP) the chain is Mitochondrial matrix. A helical membrane pass occupies residues 49 to 67 (GATAATLVMFGILHARRMY). At 68 to 438 (EDQKVVERKE…EAIGRWTSRE (371 aa)) the chain is on the mitochondrial intermembrane side. Catalysis depends on charge relay system; for autoendoproteolytic cleavage activity residues Asp-173, His-273, and Ser-387. Ser-387 functions as the Schiff-base intermediate with substrate; via pyruvic acid; for decarboxylase activity in the catalytic mechanism. The residue at position 387 (Ser-387) is a Pyruvic acid (Ser); by autocatalysis.

The protein belongs to the phosphatidylserine decarboxylase family. PSD-B subfamily. Eukaryotic type I sub-subfamily. Heterodimer of a large membrane-associated beta subunit and a small pyruvoyl-containing alpha subunit. Pyruvate is required as a cofactor. Post-translationally, is synthesized initially as an inactive proenzyme. Formation of the active enzyme involves a self-maturation process in which the active site pyruvoyl group is generated from an internal serine residue via an autocatalytic post-translational modification. Two non-identical subunits are generated from the proenzyme in this reaction, and the pyruvate is formed at the N-terminus of the alpha chain, which is derived from the carboxyl end of the proenzyme. The autoendoproteolytic cleavage occurs by a canonical serine protease mechanism, in which the side chain hydroxyl group of the serine supplies its oxygen atom to form the C-terminus of the beta chain, while the remainder of the serine residue undergoes an oxidative deamination to produce ammonia and the pyruvoyl prosthetic group on the alpha chain. During this reaction, the Ser that is part of the protease active site of the proenzyme becomes the pyruvoyl prosthetic group, which constitutes an essential element of the active site of the mature decarboxylase.

It is found in the mitochondrion inner membrane. It catalyses the reaction a 1,2-diacyl-sn-glycero-3-phospho-L-serine + H(+) = a 1,2-diacyl-sn-glycero-3-phosphoethanolamine + CO2. It functions in the pathway phospholipid metabolism; phosphatidylethanolamine biosynthesis; phosphatidylethanolamine from CDP-diacylglycerol: step 2/2. In terms of biological role, catalyzes the formation of phosphatidylethanolamine (PtdEtn) from phosphatidylserine (PtdSer). Plays a central role in phospholipid metabolism and in the interorganelle trafficking of phosphatidylserine. This Oryza sativa subsp. japonica (Rice) protein is Phosphatidylserine decarboxylase proenzyme 1, mitochondrial (PSD1).